The chain runs to 335 residues: 5-dehydro-2-deoxygluconokinase (335 aa).

It belongs to the carbohydrate kinase PfkB family.

It catalyses the reaction 5-dehydro-2-deoxy-D-gluconate + ATP = 6-phospho-5-dehydro-2-deoxy-D-gluconate + ADP + H(+). Its pathway is polyol metabolism; myo-inositol degradation into acetyl-CoA; acetyl-CoA from myo-inositol: step 5/7. Functionally, catalyzes the phosphorylation of 5-dehydro-2-deoxy-D-gluconate (2-deoxy-5-keto-D-gluconate or DKG) to 6-phospho-5-dehydro-2-deoxy-D-gluconate (DKGP). This chain is 5-dehydro-2-deoxygluconokinase, found in Geobacillus kaustophilus (strain HTA426).